Consider the following 391-residue polypeptide: Terminal nucleotidyltransferase 5C (391 aa).

Belongs to the TENT family. As to quaternary structure, interacts with BCCIP and PABPC1; the interaction has no effect on TENT5C poly(A) polymerase function. Interacts with PLK4; this interaction leads to the TENT5C recruitment into the centrosome.

Its subcellular location is the nucleus. It localises to the cytoplasm. The protein localises to the cytoskeleton. It is found in the microtubule organizing center. The protein resides in the centrosome. The enzyme catalyses RNA(n) + ATP = RNA(n)-3'-adenine ribonucleotide + diphosphate. Functionally, catalyzes the transfer of one adenosine molecule from an ATP to an mRNA poly(A) tail bearing a 3'-OH terminal group and enhances mRNA stability and gene expression. Can also elongate RNA oligos ending with uridine molecule, provided that the sequence is adenosine-rich. Mainly targets mRNAs encoding endoplasmic reticulum-targeted protein. Its function is as follows. (Microbial infection) Seems to enhance replication of some viruses, including yellow fever virus, in response to type I interferon. In Homo sapiens (Human), this protein is Terminal nucleotidyltransferase 5C.